The chain runs to 72 residues: Large ribosomal subunit protein bL28 (72 aa).

It belongs to the bacterial ribosomal protein bL28 family.

This is Large ribosomal subunit protein bL28 from Chlorobium phaeobacteroides (strain DSM 266 / SMG 266 / 2430).